A 230-amino-acid chain; its full sequence is Flagellar L-ring protein (230 aa).

The N-terminal stretch at 1-26 (MKQVRLLPSATVRAACAVAVAAFAAG) is a signal peptide. Cysteine 27 carries N-palmitoyl cysteine lipidation. The S-diacylglycerol cysteine moiety is linked to residue cysteine 27.

The protein belongs to the FlgH family. The basal body constitutes a major portion of the flagellar organelle and consists of four rings (L,P,S, and M) mounted on a central rod.

It localises to the cell outer membrane. The protein resides in the bacterial flagellum basal body. Functionally, assembles around the rod to form the L-ring and probably protects the motor/basal body from shearing forces during rotation. This is Flagellar L-ring protein from Burkholderia lata (strain ATCC 17760 / DSM 23089 / LMG 22485 / NCIMB 9086 / R18194 / 383).